The sequence spans 591 residues: L-fucose isomerase (591 aa).

Residues glutamate 337 and aspartate 361 each act as proton acceptor in the active site. Mn(2+) contacts are provided by glutamate 337, aspartate 361, and histidine 528.

The protein belongs to the L-fucose isomerase family. In terms of assembly, homohexamer. Requires Mn(2+) as cofactor.

It is found in the cytoplasm. The catalysed reaction is L-fucose = L-fuculose. It participates in carbohydrate degradation; L-fucose degradation; L-lactaldehyde and glycerone phosphate from L-fucose: step 1/3. Converts the aldose L-fucose into the corresponding ketose L-fuculose. The polypeptide is L-fucose isomerase (Salmonella schwarzengrund (strain CVM19633)).